The chain runs to 67 residues: Mitotic-spindle organizing protein 1A (67 aa).

It belongs to the MOZART1 family. In terms of assembly, part of the gamma-tubulin complex. Interacts with GIP1 and GCP3. As to expression, mostly expressed in siliques and flowers, and, to a lower extent, in leaves, roots and seedlings, with highest levels in young tissues, meristematic cells, and the vasculature.

It is found in the cytoplasm. It localises to the cytoskeleton. The protein localises to the microtubule organizing center. The protein resides in the spindle. Its subcellular location is the nucleus. It is found in the phragmoplast. It localises to the nucleus envelope. In terms of biological role, required for gamma-tubulin complex recruitment to the microtubule organizing centers (MTOCs). During mitosis, modulates gamma-tubulin complex localization, spindle stability and chromosomal segregation. Necessary for gametophyte development and embryogenesis. This is Mitotic-spindle organizing protein 1A (GIP2) from Arabidopsis thaliana (Mouse-ear cress).